The following is a 344-amino-acid chain: Melanocyte-stimulating hormone receptor (344 aa).

Residues 1-37 (MPMQGAQRKLLGSLNSTPTATSNLGLAANHTGAPCLE) lie on the Extracellular side of the membrane. The N-linked (GlcNAc...) asparagine glycan is linked to N29. The helical transmembrane segment at 38–63 (VSIPDGLFLSLGLVSLVENVLVVAAI) threads the bilayer. Topologically, residues 64–72 (AKNRNLHSS) are cytoplasmic. The chain crosses the membrane as a helical span at residues 73 to 93 (MYCFICCLALSDLLVSGSNML). The Extracellular segment spans residues 94–118 (ETAIILLLEAGTLATRASVVQQLHN). Residues 119–140 (TIDVLTCSSMLCSLCFLGAIAV) form a helical membrane-spanning segment. Topologically, residues 141–163 (DRYISIFYALRYHSIMTLPRAQR) are cytoplasmic. The chain crosses the membrane as a helical span at residues 164 to 183 (AIAAIWVTSVLSSTLFITYY). The Extracellular portion of the chain corresponds to 184 to 191 (DHAAVLLC). The chain crosses the membrane as a helical span at residues 192–211 (LVVFFLAMLVLMAVLYVHML). The Cytoplasmic segment spans residues 212 to 240 (ARACQHAQGIIRLHNRQLPAHKGFGLRGA). A helical membrane pass occupies residues 241–266 (ATLTILLGIFFLCWGPFFLHLTLVVF). At 267 to 279 (CPQHLTCNCIFKN) the chain is on the extracellular side. Residues 280-300 (FKVFLTLIICNTIIDPLIYAF) traverse the membrane as a helical segment. Over 301–344 (RSQELRRTLKEVLLCSWWPGCGAEGGGDSVWPGSCVTLRGPLPP) the chain is Cytoplasmic. The S-palmitoyl cysteine moiety is linked to residue C315.

The protein belongs to the G-protein coupled receptor 1 family. In terms of assembly, interacts with MGRN1, but does not undergo MGRN1-mediated ubiquitination; this interaction competes with GNAS-binding and thus inhibits agonist-induced cAMP production. Interacts with OPN3; the interaction results in a decrease in MC1R-mediated cAMP signaling and ultimately a decrease in melanin production in melanocytes.

It localises to the cell membrane. Receptor for MSH (alpha, beta and gamma) and ACTH. The activity of this receptor is mediated by G proteins which activate adenylate cyclase. Mediates melanogenesis, the production of eumelanin (black/brown) and phaeomelanin (red/yellow), via regulation of cAMP signaling in melanocytes. This chain is Melanocyte-stimulating hormone receptor (MC1R), found in Mico argentatus (Silvery marmoset).